The following is a 503-amino-acid chain: Zinc finger protein JACKDAW (503 aa).

The span at I32–S51 shows a compositional bias: low complexity. The tract at residues I32–V68 is disordered. S72 is subject to Phosphoserine. C2H2-type zinc fingers lie at residues F82–H104 and Y124–H154. Short sequence motifs (nuclear localization signal) lie at residues H100 to P107 and I146 to K153. A C2H2-type 2; degenerate zinc finger spans residues W159 to G182. Zn(2+)-binding residues include C161, C164, H177, C181, C188, C190, H203, and C207. The segment at Y186 to A209 adopts a CCHC-type 2; atypical zinc-finger fold. Residues R196–D208 form an SHR-binding region. 2 disordered regions span residues S301 to M417 and R432 to A465. Positions T319 to S358 are enriched in low complexity. The segment covering M381–P392 has biased composition (polar residues). Residues A396–A407 are compositionally biased toward low complexity. Residues G444–A465 show a composition bias toward polar residues.

In terms of assembly, interacts with SHR, SCR, MGP and itself. The heterodimer with SHR involves its zinc fingers. Interacts with SIEL. Binds to RGA and SCL3 competitively in the nucleus. In terms of tissue distribution, expressed in the quiescent center, the ground tissue stem cells and to a lesser extent in mature cortex and endodermis cells.

The protein resides in the nucleus. Its function is as follows. Transcription factor that, together with BIB, regulates tissue boundaries and asymmetric cell division by a rapid up-regulation of 'SCARECROW' (SCR), thus controlling the nuclear localization of 'SHORT-ROOT' (SHR) and restricting its action. Binds DNA via its zinc fingers. Recognizes and binds to SCL3 promoter sequence 5'-AGACAA-3' to promote its expression when in complex with RGA. Confines CYCD6 expression to the cortex-endodermis initial/daughter (CEI/CEID) tissues. Required for radial patterning and stem cell maintenance. Counteracted by 'MAGPIE' (MGP). Binds to the SCR and MGP promoter sequences. Controls position-dependent signals that regulate epidermal-cell-type patterning. In Arabidopsis thaliana (Mouse-ear cress), this protein is Zinc finger protein JACKDAW.